Here is a 549-residue protein sequence, read N- to C-terminus: Chaperonin GroEL (549 aa).

ATP-binding positions include 30-33 (TLGP), Lys51, 87-91 (DGTTT), Gly415, and Asp496.

This sequence belongs to the chaperonin (HSP60) family. Forms a cylinder of 14 subunits composed of two heptameric rings stacked back-to-back. Interacts with the co-chaperonin GroES.

It is found in the cytoplasm. It catalyses the reaction ATP + H2O + a folded polypeptide = ADP + phosphate + an unfolded polypeptide.. In terms of biological role, together with its co-chaperonin GroES, plays an essential role in assisting protein folding. The GroEL-GroES system forms a nano-cage that allows encapsulation of the non-native substrate proteins and provides a physical environment optimized to promote and accelerate protein folding. In Prosthecochloris aestuarii (strain DSM 271 / SK 413), this protein is Chaperonin GroEL.